We begin with the raw amino-acid sequence, 491 residues long: MYIVQIASECAPVIKAGGLGDVIYGLSRELELRGHCVELILPMYDCMRYDHIWGLHDAYRNLEVPWYGSSIFCDVFCGWVHGRLCFFIQPKSSDNFFNRGHYYGALDDHMRFAFFSKAAMEFLLRSNKRPDIIHCHDWQTGLVPVLLYEIYRFHGMDHQRVCYTIHNFKHQGIAGANILHATGLNNDSYYFSYDRLQDNFNPNAINFMKGGIVYSNYVNTVSPHHAWEARFSDISCGLGHTLEIHQQKFGGILNGLDYEVWNPEIDPLLASNFSVKTFGDKAKNKQALRERLLLETDDKKPMLCFIGRLDGQKGVHLVHHSIYYALSQGAQFVLLGSATEPNLSKWFWHEKQHLNDNPNVHLELGFDEELAHLIYGAADIIVVPSNYEPCGLTQMIGLRYGAVPVVRGVGGLVNTVFDRDYDQNHPPEKRNGFVFYQPDEYALETALSRAIALYKDDPVAFKTLALQGMAYDYSWNKPGLQYVEAYEYIRA.

Lys-15 is an ADP-alpha-D-glucose binding site.

This sequence belongs to the glycosyltransferase 1 family. Bacterial/plant glycogen synthase subfamily.

It carries out the reaction [(1-&gt;4)-alpha-D-glucosyl](n) + ADP-alpha-D-glucose = [(1-&gt;4)-alpha-D-glucosyl](n+1) + ADP + H(+). It participates in glycan biosynthesis; glycogen biosynthesis. Its function is as follows. Synthesizes alpha-1,4-glucan chains using ADP-glucose. This chain is Probable glycogen synthase 2 (glgA2), found in Synechocystis sp. (strain ATCC 27184 / PCC 6803 / Kazusa).